Consider the following 147-residue polypeptide: Prefoldin subunit alpha (147 aa).

Belongs to the prefoldin alpha subunit family. As to quaternary structure, heterohexamer of two alpha and four beta subunits.

It is found in the cytoplasm. Functionally, molecular chaperone capable of stabilizing a range of proteins. Seems to fulfill an ATP-independent, HSP70-like function in archaeal de novo protein folding. The protein is Prefoldin subunit alpha of Saccharolobus islandicus (strain L.S.2.15 / Lassen #1) (Sulfolobus islandicus).